The chain runs to 92 residues: Neuropeptide ShK-like2 (92 aa).

The signal sequence occupies residues 1–23 (MTTIRCVLFAVLLFAYCALLIKA). Residues 24-51 (RSIDAEAEKTWQEEETKTVAEKSPLKKR) constitute a propeptide that is removed on maturation. Intrachain disulfides connect cysteine 53–cysteine 92, cysteine 61–cysteine 85, and cysteine 70–cysteine 89.

Transcripts are first expressed mostly in the endoderm (with rare ectodermal cells) in the late planulae. They are mostly expressed in endodermal ganglion cells in the body column and tentacles in primary polyps, as well as in a small number of ectodermal sensory neurons in tentacles and body wall. They are not expressed in nematocytes. As to expression, transcripts are predominantly expressed in ectodermal sensory neurons in early and late planulae. They are expressed in endodermal ganglion cells in the body column and tentacles in primary polyps, as well as in a small number of ectodermal neurons in pharynx. They are not expressed in nematocytes.

In terms of biological role, in vivo, this neuropeptide induces contraction paralysis followed by death (within 2 hours) on 4 zebrafish larvae on the 15 tested. Also induces body contraction in Nematostella 11-dpf polyps. The chain is Neuropeptide ShK-like2 from Nematostella vectensis (Starlet sea anemone).